The following is a 563-amino-acid chain: Eukaryotic translation initiation factor 3 subunit D (563 aa).

The disordered stretch occupies residues 95-136; it reads PGYMRNRNRFNQRGGYRRDNRGGRFQGQGGNMGMQNLSRGRD. The interval 294 to 308 is RNA gate; that stretch reads EFDLLTVGETANDLN. Residues 528-563 form a disordered region; it reads IPNSTFETDEEDDDDDEDDVENDDGDDEKDEGDGED. Residues 534–563 show a composition bias toward acidic residues; the sequence is ETDEEDDDDDEDDVENDDGDDEKDEGDGED.

This sequence belongs to the eIF-3 subunit D family. Component of the eukaryotic translation initiation factor 3 (eIF-3) complex.

It localises to the cytoplasm. Its function is as follows. mRNA cap-binding component of the eukaryotic translation initiation factor 3 (eIF-3) complex, which is involved in protein synthesis of a specialized repertoire of mRNAs and, together with other initiation factors, stimulates binding of mRNA and methionyl-tRNAi to the 40S ribosome. The eIF-3 complex specifically targets and initiates translation of a subset of mRNAs involved in cell proliferation. In the eIF-3 complex, eif3d specifically recognizes and binds the 7-methylguanosine cap of a subset of mRNAs. This chain is Eukaryotic translation initiation factor 3 subunit D, found in Nematostella vectensis (Starlet sea anemone).